The primary structure comprises 1072 residues: DNA-directed RNA polymerase subunit beta (1072 aa).

Belongs to the RNA polymerase beta chain family. In terms of assembly, in plastids the minimal PEP RNA polymerase catalytic core is composed of four subunits: alpha, beta, beta', and beta''. When a (nuclear-encoded) sigma factor is associated with the core the holoenzyme is formed, which can initiate transcription.

The protein resides in the plastid. Its subcellular location is the chloroplast. It catalyses the reaction RNA(n) + a ribonucleoside 5'-triphosphate = RNA(n+1) + diphosphate. DNA-dependent RNA polymerase catalyzes the transcription of DNA into RNA using the four ribonucleoside triphosphates as substrates. This is DNA-directed RNA polymerase subunit beta from Lemna minor (Common duckweed).